The sequence spans 597 residues: MFS-type transporter FPY5 (597 aa).

Residues 1–55 (MSETTGLPLKHLQGSPPGTPVNTNNESNEASPDDGCRLPDTVTEAEASSDNHGSV) form a disordered region. Composition is skewed to polar residues over residues 20-30 (PVNTNNESNEA) and 46-55 (EASSDNHGSV). N-linked (GlcNAc...) asparagine glycosylation occurs at asparagine 25. Asparagine 72 carries N-linked (GlcNAc...) asparagine glycosylation. Transmembrane regions (helical) follow at residues 94–114 (LSLLLSTLETTIVSTALVSIV), 120–140 (FNMAGWIVTSYLVTYTGFLII), 147–167 (IFGCKLMLLLAITIFTVFSMA), 183–203 (FQGMGGSGIYSLSTIMVPLMV), 214–234 (IMSSTFILSSVLGPILGGAIT), 241–261 (WVFYFNGPGGALAAVLLAFSV), 286–306 (VDFVGMTVSLAASILIIFALE), 316–336 (SGAIVSTFVLSGVLWIAFIAW), and 360–380 (FVMGLLLNGFFTGFPFMAALI). Asparagine 390 carries an N-linked (GlcNAc...) asparagine glycan. Helical transmembrane passes span 402–422 (LPLLLLSPLATAINGILVSKL), 424–444 (VPPLYTLFLGGSLQTIGVGLY), 463–483 (IMGLGFGFNLSTILMMVPLVV), 498–518 (IRVLGGTIGLAVCSALLINHI), and 562–582 (EQMRVMLYFSIASILSLVLLV).

This sequence belongs to the major facilitator superfamily. TCR/Tet family.

It is found in the membrane. It participates in secondary metabolite biosynthesis. Its function is as follows. MFS-type transporter; part of the gene cluster that mediates the biosynthesis of the gamma-pyrones fusapyrone (FPY) and deoxyfusapyrone (dFPY). In Fusarium mangiferae (Mango malformation disease fungus), this protein is MFS-type transporter FPY5.